The sequence spans 367 residues: tRNA pseudouridine synthase D (367 aa).

The active-site Nucleophile is Asp-80. Residues 156 to 316 (GIPNWFGEQR…LKQERRALRL (161 aa)) enclose the TRUD domain.

Belongs to the pseudouridine synthase TruD family.

The catalysed reaction is uridine(13) in tRNA = pseudouridine(13) in tRNA. Its function is as follows. Responsible for synthesis of pseudouridine from uracil-13 in transfer RNAs. This is tRNA pseudouridine synthase D from Xanthomonas campestris pv. campestris (strain 8004).